The following is a 248-amino-acid chain: 4-hydroxy-tetrahydrodipicolinate reductase (248 aa).

NAD(+) is bound by residues 9-14 (GARGKV), 77-79 (GTT), and 104-107 (APNF). Residue His134 is the Proton donor/acceptor of the active site. A (S)-2,3,4,5-tetrahydrodipicolinate-binding site is contributed by His135. Lys138 acts as the Proton donor in catalysis. 144 to 145 (GT) provides a ligand contact to (S)-2,3,4,5-tetrahydrodipicolinate.

It belongs to the DapB family.

It is found in the cytoplasm. It carries out the reaction (S)-2,3,4,5-tetrahydrodipicolinate + NAD(+) + H2O = (2S,4S)-4-hydroxy-2,3,4,5-tetrahydrodipicolinate + NADH + H(+). The catalysed reaction is (S)-2,3,4,5-tetrahydrodipicolinate + NADP(+) + H2O = (2S,4S)-4-hydroxy-2,3,4,5-tetrahydrodipicolinate + NADPH + H(+). The protein operates within amino-acid biosynthesis; L-lysine biosynthesis via DAP pathway; (S)-tetrahydrodipicolinate from L-aspartate: step 4/4. Functionally, catalyzes the conversion of 4-hydroxy-tetrahydrodipicolinate (HTPA) to tetrahydrodipicolinate. This is 4-hydroxy-tetrahydrodipicolinate reductase from Nocardia farcinica (strain IFM 10152).